The sequence spans 219 residues: Large ribosomal subunit protein bL25 (219 aa).

Residues 188–219 are disordered; the sequence is TVAAPADTAVQPESSSTKGKKDEDGALAKDKK. Basic and acidic residues predominate over residues 206-219; it reads GKKDEDGALAKDKK.

This sequence belongs to the bacterial ribosomal protein bL25 family. CTC subfamily. Part of the 50S ribosomal subunit; part of the 5S rRNA/L5/L18/L25 subcomplex. Contacts the 5S rRNA. Binds to the 5S rRNA independently of L5 and L18.

In terms of biological role, this is one of the proteins that binds to the 5S RNA in the ribosome where it forms part of the central protuberance. This is Large ribosomal subunit protein bL25 from Elusimicrobium minutum (strain Pei191).